Consider the following 309-residue polypeptide: Mitochondrial import receptor subunit TOM34 (309 aa).

A Phosphoserine modification is found at S8. TPR repeat units lie at residues 9–42, 51–84, and 85–118; these read VEQLRAAGNQNFRNGQYGEASALYERALRLLQAR, SVLYSNRAACYLKDGNCTDCIKDCTSALALVPFS, and IKPLLRRASAYEALEKYALAYVDYKTVLQIDNSV. The disordered stretch occupies residues 158 to 189; that stretch reads WNSLPSDNHKETAKTKSKEATATKSRVPSAGD. Residue S160 is modified to Phosphoserine. Over residues 164-178 the composition is skewed to basic and acidic residues; sequence DNHKETAKTKSKEAT. S186 bears the Phosphoserine mark. TPR repeat units lie at residues 193-226, 227-260, and 261-294; these read AKALKEEGNDLVKKGNHKKAIEKYSESLLCSSLE, SATYSNRALCHLVLKQYKEAVKDCTEALKLDGKN, and VKAFYRRAQAYKALKDYKSSLSDISSLLQIEPRN. A Glycyl lysine isopeptide (Lys-Gly) (interchain with G-Cter in SUMO2) cross-link involves residue K197.

Belongs to the Tom34 family. Interacts with HSP90A, VCP, ATP6V1D, KIAA0665, AMPK, and DMAP1 through its TPR repeat. In terms of tissue distribution, isoform 1 is ubiquitously expressed while isoform 2 is expressed only in mature testicular germ cells. Isoform 1 is expressed in all testicular cells. Isoform 2 is highly expressed in early to late pachytene cells but expression is significantly decreased in round spermatid cells.

Its subcellular location is the cytoplasm. It is found in the mitochondrion outer membrane. In terms of biological role, plays a role in the import of cytosolically synthesized preproteins into mitochondria. Binds the mature portion of precursor proteins. Interacts with cellular components, and possesses weak ATPase activity. May be a chaperone-like protein that helps to keep newly synthesized precursors in an unfolded import compatible state. The sequence is that of Mitochondrial import receptor subunit TOM34 (Tomm34) from Mus musculus (Mouse).